The following is a 299-amino-acid chain: Regucalcin (299 aa).

An a divalent metal cation-binding site is contributed by Glu-18. Substrate-binding residues include Arg-101, Asn-103, and Glu-121. Residues Asn-154 and Asp-204 each coordinate a divalent metal cation. Asp-204 functions as the Proton donor/acceptor in the catalytic mechanism.

This sequence belongs to the SMP-30/CGR1 family. The cofactor is Zn(2+). It depends on Mn(2+) as a cofactor. Ca(2+) is required as a cofactor. Mg(2+) serves as cofactor.

It localises to the cytoplasm. It carries out the reaction D-glucono-1,5-lactone + H2O = D-gluconate + H(+). It participates in cofactor biosynthesis; L-ascorbate biosynthesis via UDP-alpha-D-glucuronate pathway; L-ascorbate from UDP-alpha-D-glucuronate: step 3/4. Its function is as follows. Gluconolactonase with low activity towards other sugar lactones, including gulonolactone and galactonolactone. Catalyzes a key step in ascorbic acid (vitamin C) biosynthesis. Can also hydrolyze diisopropyl phosphorofluoridate and phenylacetate (in vitro). Calcium-binding protein. Modulates Ca(2+) signaling, and Ca(2+)-dependent cellular processes and enzyme activities. In Gallus gallus (Chicken), this protein is Regucalcin.